Here is a 192-residue protein sequence, read N- to C-terminus: MSEEQLQKPIDCADVKGEAEKISTTEGGIKAAEDKEKGVVAEASGEQAEGEVNQKKVVANPLKSEGTITIGEALEAAVLTAGNKPVEWSDAAAIQAAEVRATGRTNIMPGGVAASAQSAATLNARIGSDDTKTTLADVLTGASSKLPSDKAATRKDAEGVTGAEMRNDPHLTTYPTGVAASVAAAARINQSK.

The Nuclear localization signal (NLS) motif lies at 5–9; the sequence is QLQKP. 2 consecutive SMP domains span residues 68-125 and 133-190; these read ITIG…LNAR and TTLA…RINQ. The interval 146-174 is disordered; sequence LPSDKAATRKDAEGVTGAEMRNDPHLTTY. Over residues 147–158 the composition is skewed to basic and acidic residues; it reads PSDKAATRKDAE.

This sequence belongs to the LEA type SMP family.

It is found in the cytoplasm. It localises to the nucleus. Its function is as follows. LEA proteins are late embryonic proteins abundant in higher plant seed embryos. The function of those proteins is not known. This is Late embryogenesis abundant protein 47 from Arabidopsis thaliana (Mouse-ear cress).